The following is a 1944-amino-acid chain: MSNFYEERTTMIAARDLQEFVPFGRDHCKHHPNALNLQLRQLQPASELWSSDGAAGLVGSLQEVTIHEKQKESWQLRKGVSEIGEDVDYDEELYVAGNMVIWSKGSKSQALAVYKAFTVDSPVQQALWCDFIISQDKSEKAYSSNEVEKCICILQSSCINMHSIEGKDYIASLPFQVANVWPTKYGLLFERSASSHEVPPGSPREPLPTMFSMLHPLDEITPLVCKSGSLFGSSRVQYVVDHAMKIVFLNTDPSIVMTYDAVQNVHSVWTLRRVKSEEENVVLKFSEQGGTPQNVATSSSLTAHLRSLSKGDSPVTSPFQNYSSIHSQSRSTSSPSLHSRSPSISNMAALSRAHSPALGVHSFSGVQRFNISSHNQSPKRHSISHSPNSNSNGSFLAPETEPIVPELCIDHLWTETITNIREKNSQASKVFITSDLCGQKFLCFLVESQLQLRCVKFQESNDKTQLIFGSVTNIPAKDAAPVEKIDTMLVLEGSGNLVLYTGVVRVGKVFIPGLPAPSLTMSNTMPRPSTPLDGVSTPKPLSKLLGSLDEVVLLSPVPELRDSSKLHDSLYNEDCTFQQLGTYIHSIRDPVHNRVTLELSNGSMVRITIPEIATSELVQTCLQAIKFILPKEIAVQMLVKWYNVHSAPGGPSYHSEWNLFVTCLMNMMGYNTDRLAWTRNFDFEGSLSPVIAPKKARPSETGSDDDWEYLLNSDYHQNVESHLLNRSLCLSPSEASQMKDEDFSQNLSLDSSTLLFTHIPAIFFVLHLVYEELKLNTLMGEGICSLVELLVQLARDLKLGPYVDHYYRDYPTLVRTTGQVCTIDPGQTGFMHHPSFFTSEPPSIYQWVSSCLKGEGMPPYPYLPGICERSRLVVLSIALYILGDESLVSDESSQYLTRITIAPQKLQVEQEENRFSFRHSTSVSSLAERLVVWMTNVGFTLRDLETLPFGIALPIRDAIYHCREQPASDWPEAVCLLIGRQDLSKQACEGNLPKGKSVLSSDVPSGTETEEEDDGMNDMNHEVMSLIWSEDLRVQDVRRLLQSAHPVRVNVVQYPELSDHEFIEEKENRLLQLCQRTMALPVGRGMFTLFSYHPVPTEPLPIPKLNLTGRAPPRNTTVDLNSGNIDVPPNMTSWASFHNGVAAGLKIAPASQIDSAWIVYNKPKHAELANEYAGFLMALGLNGHLTKLATLNIHDYLTKGHEMTSIGLLLGVSAAKLGTMDMSITRLLSIHIPALLPPTSTELDVPHNVQVAAVVGIGLVYQGTAHRHTAEVLLAEIGRPPGPEMEYCTDRESYSLAAGLALGMVCLGHGSNLIGMSDLNVPEQLYQYMVGGHRRFQTGMHREKHKSPSYQIKEGDTINVDVTCPGATLALAMIYLKTNNRSIADWLRAPDTMYLLDFVKPEFLLLRTLARCLILWDDILPNSKWVDSNVPQIIRENSISLSEIELPCSEDLNLETLSQAHVYIIAGACLSLGFRFAGSENLSAFNCLHKFAKDFMTYLSAPNASVTGPHNLETCLSVVLLSLAMVMAGSGNLKVLQLCRFLHMKTGGEMNYGFHLAHHMALGLLFLGGGRYSLSTSNSSIAALLCALYPHFPAHSTDNRYHLQALRHLYVLAAEPRLLVPVDVDTNTPCYALLEVTYKGTQWYEQTKEELMAPTLLPELHLLKQIKVKGPRYWELLIDLSKGTQHLKSILSKDGVLYVKLRAGQLSYKEDPMGWQSLLAQTVANRNSEARAFKPETISAFTSDPALLSFAEYFCKPTVNMGQKQEILDLFSSVLYECVTQETPEMLPAYIAMDQAIRRLGRREMSETSELWQIKLVLEFFSSRSHQERLQNHPKRGLFMNSEFLPVVKCTIDNTLDQWLQVGGDMCVHAYLSGQPLEESQLSMLACFLVYHSVPAPQHLPPIGLEGSTSFAELLFKFKQLKMPVRALLRLAPLLLGNPQPMVM.

S51, S60, S202, and S286 each carry phosphoserine. The residue at position 291 (T291) is a Phosphothreonine. The disordered stretch occupies residues 305 to 343; that stretch reads LRSLSKGDSPVTSPFQNYSSIHSQSRSTSSPSLHSRSPS. S313, S341, S343, S355, S362, S373, and S377 each carry phosphoserine. The span at 323–343 shows a compositional bias: low complexity; the sequence is SSIHSQSRSTSSPSLHSRSPS. The segment at 373-396 is disordered; the sequence is SHNQSPKRHSISHSPNSNSNGSFL. Positions 384-394 are enriched in low complexity; the sequence is SHSPNSNSNGS. Residue T537 is modified to Phosphothreonine. S547 and S555 each carry phosphoserine. Y571 carries the phosphotyrosine modification. Phosphoserine occurs at positions 686, 688, and 916. Residues 994-1016 are disordered; sequence KGKSVLSSDVPSGTETEEEDDGM. Positions 998–1007 are enriched in polar residues; the sequence is VLSSDVPSGT. PC repeat units follow at residues 1297–1325, 1366–1404, 1467–1501, and 1520–1552; these read AAGLALGMVCLGHGSNLIGMSDLNVPEQL, GATLALAMIYLKTNNRSIADWLRAPDTMYLLDFVKPEFL, GACLSLGFRFAGSENLSAFNCLHKFAKDFMTYLSA, and LLSLAMVMAGSGNLKVLQLCRFLHMKTGGEMNY.

Belongs to the APC1 family. The mammalian APC/C is composed at least of 14 distinct subunits ANAPC1, ANAPC2, CDC27/APC3, ANAPC4, ANAPC5, CDC16/APC6, ANAPC7, CDC23/APC8, ANAPC10, ANAPC11, CDC26/APC12, ANAPC13, ANAPC15 and ANAPC16 that assemble into a complex of at least 19 chains with a combined molecular mass of around 1.2 MDa; APC/C interacts with FZR1 and FBXO5. Phosphorylated. Phosphorylation on Ser-355 occurs specifically during mitosis.

The protein operates within protein modification; protein ubiquitination. Its function is as follows. Component of the anaphase promoting complex/cyclosome (APC/C), a cell cycle-regulated E3 ubiquitin ligase that controls progression through mitosis and the G1 phase of the cell cycle. The APC/C complex acts by mediating ubiquitination and subsequent degradation of target proteins: it mainly mediates the formation of 'Lys-11'-linked polyubiquitin chains and, to a lower extent, the formation of 'Lys-48'- and 'Lys-63'-linked polyubiquitin chains. The APC/C complex catalyzes assembly of branched 'Lys-11'-/'Lys-48'-linked branched ubiquitin chains on target proteins. In Homo sapiens (Human), this protein is Anaphase-promoting complex subunit 1 (ANAPC1).